The sequence spans 617 residues: Chaperone protein DnaK (617 aa).

At Thr174 the chain carries Phosphothreonine; by autocatalysis. The segment covering 575-592 has biased composition (low complexity); sequence AQAQQQAQQQAQGQQGAQ. A disordered region spans residues 575-617; sequence AQAQQQAQQQAQGQQGAQTDNQTGQNDGKTIDVDYEEVDDDDK. A compositionally biased stretch (polar residues) spans 593-602; the sequence is TDNQTGQNDG. Positions 607-617 are enriched in acidic residues; it reads VDYEEVDDDDK.

The protein belongs to the heat shock protein 70 family.

Functionally, acts as a chaperone. This chain is Chaperone protein DnaK, found in Halothermothrix orenii (strain H 168 / OCM 544 / DSM 9562).